Here is a 151-residue protein sequence, read N- to C-terminus: Ribonuclease H (151 aa).

The RNase H type-1 domain maps to 1-141 (MKHVDIFTDG…ADELARKGME (141 aa)). D9, E47, D69, and D133 together coordinate Mg(2+).

It belongs to the RNase H family. Monomer. It depends on Mg(2+) as a cofactor.

The protein localises to the cytoplasm. It catalyses the reaction Endonucleolytic cleavage to 5'-phosphomonoester.. Endonuclease that specifically degrades the RNA of RNA-DNA hybrids. The sequence is that of Ribonuclease H from Rhizobium johnstonii (strain DSM 114642 / LMG 32736 / 3841) (Rhizobium leguminosarum bv. viciae).